A 32-amino-acid polypeptide reads, in one-letter code: Photosystem II reaction center protein T (32 aa).

The helical transmembrane segment at 3 to 23 (ALVYVFLLIGTLMIIFFAIFF) threads the bilayer.

This sequence belongs to the PsbT family. As to quaternary structure, PSII is composed of 1 copy each of membrane proteins PsbA, PsbB, PsbC, PsbD, PsbE, PsbF, PsbH, PsbI, PsbJ, PsbK, PsbL, PsbM, PsbT, PsbY, PsbZ, Psb30/Ycf12, at least 3 peripheral proteins of the oxygen-evolving complex and a large number of cofactors. It forms dimeric complexes.

It localises to the plastid. The protein localises to the chloroplast thylakoid membrane. In terms of biological role, found at the monomer-monomer interface of the photosystem II (PS II) dimer, plays a role in assembly and dimerization of PSII. PSII is a light-driven water plastoquinone oxidoreductase, using light energy to abstract electrons from H(2)O, generating a proton gradient subsequently used for ATP formation. This is Photosystem II reaction center protein T from Cyanidioschyzon merolae (strain NIES-3377 / 10D) (Unicellular red alga).